We begin with the raw amino-acid sequence, 306 residues long: Serine/threonine-protein phosphatase PP2A-1 catalytic subunit (306 aa).

Mn(2+) is bound by residues aspartate 54, histidine 56, aspartate 82, and asparagine 114. The active-site Proton donor is the histidine 115. Residues histidine 164 and histidine 238 each coordinate Mn(2+).

It belongs to the PPP phosphatase family. PP-2A subfamily. It depends on Mn(2+) as a cofactor.

It localises to the cytoplasm. The catalysed reaction is O-phospho-L-seryl-[protein] + H2O = L-seryl-[protein] + phosphate. It catalyses the reaction O-phospho-L-threonyl-[protein] + H2O = L-threonyl-[protein] + phosphate. The chain is Serine/threonine-protein phosphatase PP2A-1 catalytic subunit (PP2A1) from Oryza sativa subsp. indica (Rice).